We begin with the raw amino-acid sequence, 164 residues long: Cyanate hydratase (164 aa).

Active-site residues include R104, E107, and S130.

This sequence belongs to the cyanase family.

The catalysed reaction is cyanate + hydrogencarbonate + 3 H(+) = NH4(+) + 2 CO2. Functionally, catalyzes the reaction of cyanate with bicarbonate to produce ammonia and carbon dioxide. In Botryotinia fuckeliana (strain B05.10) (Noble rot fungus), this protein is Cyanate hydratase.